The following is a 244-amino-acid chain: Lipoprotein-releasing system ATP-binding protein LolD (244 aa).

Residues 19–244 (IRAEALAKTY…KLRELAPSAV (226 aa)) enclose the ABC transporter domain. 55–62 (GASGAGKS) serves as a coordination point for ATP.

Belongs to the ABC transporter superfamily. Lipoprotein translocase (TC 3.A.1.125) family. The complex is composed of two ATP-binding proteins (LolD) and two transmembrane proteins (LolC and LolE).

It is found in the cell inner membrane. Part of the ABC transporter complex LolCDE involved in the translocation of mature outer membrane-directed lipoproteins, from the inner membrane to the periplasmic chaperone, LolA. Responsible for the formation of the LolA-lipoprotein complex in an ATP-dependent manner. This is Lipoprotein-releasing system ATP-binding protein LolD from Xanthomonas oryzae pv. oryzae (strain MAFF 311018).